Consider the following 367-residue polypeptide: Phosphoribosylaminoimidazole-succinocarboxamide synthase (367 aa).

The protein belongs to the SAICAR synthetase family.

The enzyme catalyses 5-amino-1-(5-phospho-D-ribosyl)imidazole-4-carboxylate + L-aspartate + ATP = (2S)-2-[5-amino-1-(5-phospho-beta-D-ribosyl)imidazole-4-carboxamido]succinate + ADP + phosphate + 2 H(+). It participates in purine metabolism; IMP biosynthesis via de novo pathway; 5-amino-1-(5-phospho-D-ribosyl)imidazole-4-carboxamide from 5-amino-1-(5-phospho-D-ribosyl)imidazole-4-carboxylate: step 1/2. This chain is Phosphoribosylaminoimidazole-succinocarboxamide synthase, found in Aliivibrio fischeri (strain MJ11) (Vibrio fischeri).